The following is a 116-amino-acid chain: Staphylococcal complement inhibitor (116 aa).

Residues 1-31 form the signal peptide; the sequence is MKIRKSILAGTLAIVLASPLVTNLDKNEAQA. The interval 62–79 is essential for activity; the sequence is LATGSLNTYYKRTIKISG.

It belongs to the SCIN family.

Its subcellular location is the secreted. In terms of biological role, involved in countering the first line of host defense mechanisms. Efficiently inhibits opsonization, phagocytosis and killing of S.aureus by human neutrophils. Acts by binding and stabilizing human C3 convertases (C4b2a and C3bBb), leading to their inactivation. The convertases are no longer able to cleave complement C3, therefore preventing further C3b deposition on the bacterial surface and phagocytosis of the bacterium. Also prevents C5a-induced neutrophil responses. This Staphylococcus aureus (strain N315) protein is Staphylococcal complement inhibitor (scn).